The sequence spans 227 residues: uncharacterized protein (227 aa).

Transmembrane regions (helical) follow at residues Cys13–Ser35 and Ile155–Leu177. The segment at Gly192–Phe227 is disordered. Over residues Gly217 to Phe227 the composition is skewed to pro residues.

The protein localises to the cell membrane. This is an uncharacterized protein from Treponema pallidum (strain Nichols).